A 269-amino-acid chain; its full sequence is MPELPEVETSRRGIEPHLVGATILHAHIRNGRLRWPVSDEIYRLSDTPVLSVQRRAKYLLLELPDGWIIIHLGMSGSLRILSEALPAEKHDHVDLVMSNGKILRYTDPRRFGAWLWTKELEGHNVLAHLGPEPLSDEFNGEYLQQKCAKKKTAIKPWLMDNKLVVGVGNIYASESLFAAGIHPDRLASSLSTEECDLLARVIKAVLLRSIEQGGTTLKDFLQGDGKPGYFAQELQVYGRKGEPCRVCGTPIAATKHAQRATFYCRHCQK.

Pro-2 acts as the Schiff-base intermediate with DNA in catalysis. Catalysis depends on Glu-3, which acts as the Proton donor. Lys-57 acts as the Proton donor; for beta-elimination activity in catalysis. The DNA site is built by His-90, Arg-109, and Lys-150. The FPG-type zinc-finger motif lies at 235-269; sequence QVYGRKGEPCRVCGTPIAATKHAQRATFYCRHCQK. Catalysis depends on Arg-259, which acts as the Proton donor; for delta-elimination activity.

Belongs to the FPG family. In terms of assembly, monomer. Zn(2+) serves as cofactor.

It carries out the reaction Hydrolysis of DNA containing ring-opened 7-methylguanine residues, releasing 2,6-diamino-4-hydroxy-5-(N-methyl)formamidopyrimidine.. The enzyme catalyses 2'-deoxyribonucleotide-(2'-deoxyribose 5'-phosphate)-2'-deoxyribonucleotide-DNA = a 3'-end 2'-deoxyribonucleotide-(2,3-dehydro-2,3-deoxyribose 5'-phosphate)-DNA + a 5'-end 5'-phospho-2'-deoxyribonucleoside-DNA + H(+). In terms of biological role, involved in base excision repair of DNA damaged by oxidation or by mutagenic agents. Acts as a DNA glycosylase that recognizes and removes damaged bases. Has a preference for oxidized purines, such as 7,8-dihydro-8-oxoguanine (8-oxoG). Has AP (apurinic/apyrimidinic) lyase activity and introduces nicks in the DNA strand. Cleaves the DNA backbone by beta-delta elimination to generate a single-strand break at the site of the removed base with both 3'- and 5'-phosphates. The polypeptide is Formamidopyrimidine-DNA glycosylase (Salmonella paratyphi B (strain ATCC BAA-1250 / SPB7)).